Consider the following 357-residue polypeptide: CRISPR system Cms protein Csm5 (357 aa).

It belongs to the CRISPR-associated Csm5 family. Part of the Csm effector complex that includes at least Cas10(1), Csm2(3), Csm3(5), Csm4(1), Csm5(1) and mature crRNA. The Csm complex is elongated and slightly twisted with a maximal length of 215 Angstroms and a diameter of 75-80 Angstroms. It has been modeled to have a central protein filamant of Csm3 subunits along which the dsRNA helix of paired crRNA and target RNA binds. The filament is capped at one end by Cas10 and Csm4 and at the other end by Csm5; ssDNA is thought to bind to the N-terminal HD domain of Cas10. Csm with a precursor crRNA does not include Csm5, while Cas6, the enzyme probably involved in pre-crRNA processing, is found associated with a subset of the Csm complex.

Functionally, CRISPR (clustered regularly interspaced short palindromic repeat) is an adaptive immune system that provides protection against mobile genetic elements (viruses, transposable elements and conjugative plasmids). CRISPR clusters contain spacers, sequences complementary to antecedent mobile elements, and target invading nucleic acids. CRISPR clusters are transcribed and processed into CRISPR RNA (crRNA). The type III-A Csm effector complex binds crRNA and acts as a crRNA-guided RNase, DNase and cyclic oligoadenylate synthase; binding of target RNA cognate to the crRNA is required for all activities. In a heterologous host this Csm effector complex restricts ssRNA phage MS2, suggesting it may target RNA viruses in vivo. Csm functions as a non-specific ssDNase. Base-pairing between crRNA and target RNA to form a ternary Csm complex activates a ssDNase activity; target RNA cleavage suppresses the ssDNase, a temporal control that prevents uncontrolled DNA degradation. Viral RNA transcripts probably tether the Csm complex to the viral genome, recruiting Cas10 ssDNA activity which is able to degrade DNA in the transcription bubble, spatially controlling the DNase activity. In terms of biological role, this subunit might be involved in maturation of a crRNA intermediate to its mature form. The polypeptide is CRISPR system Cms protein Csm5 (Streptococcus thermophilus).